We begin with the raw amino-acid sequence, 450 residues long: tRNA-2-methylthio-N(6)-dimethylallyladenosine synthase (450 aa).

The region spanning 2 to 119 (KKVFVKTYGC…LPDLIARRQR (118 aa)) is the MTTase N-terminal domain. The [4Fe-4S] cluster site is built by cysteine 11, cysteine 48, cysteine 82, cysteine 156, cysteine 160, and cysteine 163. Residues 142–375 (RVEGPSAFVS…QATIEENVQR (234 aa)) enclose the Radical SAM core domain. Residues 378-448 (QGMVGTVQRI…PHSLRGEIVV (71 aa)) form the TRAM domain.

This sequence belongs to the methylthiotransferase family. MiaB subfamily. As to quaternary structure, monomer. The cofactor is [4Fe-4S] cluster.

It is found in the cytoplasm. The catalysed reaction is N(6)-dimethylallyladenosine(37) in tRNA + (sulfur carrier)-SH + AH2 + 2 S-adenosyl-L-methionine = 2-methylsulfanyl-N(6)-dimethylallyladenosine(37) in tRNA + (sulfur carrier)-H + 5'-deoxyadenosine + L-methionine + A + S-adenosyl-L-homocysteine + 2 H(+). In terms of biological role, catalyzes the methylthiolation of N6-(dimethylallyl)adenosine (i(6)A), leading to the formation of 2-methylthio-N6-(dimethylallyl)adenosine (ms(2)i(6)A) at position 37 in tRNAs that read codons beginning with uridine. The protein is tRNA-2-methylthio-N(6)-dimethylallyladenosine synthase of Cupriavidus taiwanensis (strain DSM 17343 / BCRC 17206 / CCUG 44338 / CIP 107171 / LMG 19424 / R1) (Ralstonia taiwanensis (strain LMG 19424)).